A 468-amino-acid chain; its full sequence is Glutamine synthetase (468 aa).

The GS beta-grasp domain occupies 14–98 (HDVKYVDLRF…ILCDVYEPST (85 aa)). A GS catalytic domain is found at 106 to 468 (PRGIAKAAEK…PIEYKMYYSV (363 aa)). Positions 131 and 133 each coordinate Mg(2+). Glutamate 209 serves as a coordination point for ATP. Positions 214 and 221 each coordinate Mg(2+). L-glutamate contacts are provided by residues 265-266 (NG) and glycine 266. Residue histidine 270 participates in Mg(2+) binding. ATP is bound by residues 272-274 (HQS) and serine 274. L-glutamate contacts are provided by arginine 322, glutamate 328, and arginine 340. ATP is bound by residues arginine 340, arginine 345, and lysine 353. Glutamate 358 is a Mg(2+) binding site. An L-glutamate-binding site is contributed by arginine 360. O-AMP-tyrosine is present on tyrosine 398.

Belongs to the glutamine synthetase family. In terms of assembly, oligomer of 12 subunits arranged in the form of two hexameric ring. Mg(2+) serves as cofactor.

It is found in the cytoplasm. The enzyme catalyses L-glutamate + NH4(+) + ATP = L-glutamine + ADP + phosphate + H(+). The activity of this enzyme could be controlled by adenylation under conditions of abundant glutamine. Catalyzes the ATP-dependent biosynthesis of glutamine from glutamate and ammonia. The protein is Glutamine synthetase of Azospirillum brasilense.